The sequence spans 258 residues: Na(+)-translocating NADH-quinone reductase subunit C (258 aa).

A helical membrane pass occupies residues 14-34 (LIVVLAVSLICSVIVAGAVVG). Serine 226 carries the post-translational modification FMN phosphoryl serine.

This sequence belongs to the NqrC family. As to quaternary structure, composed of six subunits; NqrA, NqrB, NqrC, NqrD, NqrE and NqrF. Requires FMN as cofactor.

It localises to the cell inner membrane. The enzyme catalyses a ubiquinone + n Na(+)(in) + NADH + H(+) = a ubiquinol + n Na(+)(out) + NAD(+). Functionally, NQR complex catalyzes the reduction of ubiquinone-1 to ubiquinol by two successive reactions, coupled with the transport of Na(+) ions from the cytoplasm to the periplasm. NqrA to NqrE are probably involved in the second step, the conversion of ubisemiquinone to ubiquinol. The chain is Na(+)-translocating NADH-quinone reductase subunit C from Neisseria meningitidis serogroup A / serotype 4A (strain DSM 15465 / Z2491).